The sequence spans 101 residues: MANITVTFTITEFCLHTGVTEEELNEIVGLGVIEPYEDDNANWQFDDRAASVVQRALRLREELALDWPGIAVALTLLEENSRLREENRQLLLRLSRFISHP.

This sequence belongs to the CbpM family.

Interacts with CbpA and inhibits both the DnaJ-like co-chaperone activity and the DNA binding activity of CbpA. Together with CbpA, modulates the activity of the DnaK chaperone system. Does not inhibit the co-chaperone activity of DnaJ. The chain is Chaperone modulatory protein CbpM from Salmonella arizonae (strain ATCC BAA-731 / CDC346-86 / RSK2980).